A 146-amino-acid polypeptide reads, in one-letter code: Hemoglobin subunit beta (146 aa).

The 145-residue stretch at 2 to 146 (HWSAEEKQLI…VAHALARKYH (145 aa)) folds into the Globin domain. Heme b is bound by residues His63 and His92.

Belongs to the globin family. Heterotetramer of two alpha chains and two beta chains. Red blood cells.

Its function is as follows. Involved in oxygen transport from the lung to the various peripheral tissues. This Anseranas semipalmata (Magpie goose) protein is Hemoglobin subunit beta (HBB).